Here is a 506-residue protein sequence, read N- to C-terminus: Acetylcholine receptor subunit gamma (506 aa).

The first 17 residues, 1 to 17 (MVLTLLLIICLALEVRS), serve as a signal peptide directing secretion. The Extracellular segment spans residues 18-235 (ENEEGRLIEK…IIFFLIIQRK (218 aa)). An N-linked (GlcNAc...) asparagine glycan is attached at N85. C145 and C159 are oxidised to a cystine. A run of 3 helical transmembrane segments spans residues 236–260 (PLFY…VYFL), 269–287 (CTLS…FLIA), and 303–324 (YLIF…VLNV). At 325–466 (SLRTPNTHSL…WVLIGKVIDK (142 aa)) the chain is on the cytoplasmic side. Y381 is modified (phosphotyrosine; by Tyr-kinases). Residues 467 to 490 (ACFWIALLLFSIGTLAIFLTGHFN) form a helical membrane-spanning segment.

Belongs to the ligand-gated ion channel (TC 1.A.9) family. Acetylcholine receptor (TC 1.A.9.1) subfamily. Gamma/CHRNG sub-subfamily. As to quaternary structure, pentamer of two alpha chains, and one each of the beta, delta, and gamma chains. In terms of processing, seems not to be glycosylated on Asn-158.

The protein localises to the postsynaptic cell membrane. The protein resides in the cell membrane. The enzyme catalyses K(+)(in) = K(+)(out). It catalyses the reaction Na(+)(in) = Na(+)(out). After binding acetylcholine, the AChR responds by an extensive change in conformation that affects all subunits and leads to opening of an ion-conducting channel across the plasma membrane. The sequence is that of Acetylcholine receptor subunit gamma (CHRNG) from Tetronarce californica (Pacific electric ray).